The primary structure comprises 361 residues: Phenylalanine--tRNA ligase alpha subunit (361 aa).

E260 is a Mg(2+) binding site.

It belongs to the class-II aminoacyl-tRNA synthetase family. Phe-tRNA synthetase alpha subunit type 1 subfamily. As to quaternary structure, tetramer of two alpha and two beta subunits. The cofactor is Mg(2+).

It is found in the cytoplasm. It catalyses the reaction tRNA(Phe) + L-phenylalanine + ATP = L-phenylalanyl-tRNA(Phe) + AMP + diphosphate + H(+). The sequence is that of Phenylalanine--tRNA ligase alpha subunit from Bartonella bacilliformis (strain ATCC 35685 / KC583 / Herrer 020/F12,63).